Consider the following 338-residue polypeptide: Ketoreductase azaE (338 aa).

2 residues coordinate NADP(+): lysine 41 and tyrosine 166.

Belongs to the NAD(P)-dependent epimerase/dehydratase family. Dihydroflavonol-4-reductase subfamily.

The protein operates within secondary metabolite biosynthesis. In terms of biological role, ketoreductase; part of the gene cluster that mediates the biosynthesis of azaphilones, a class of fungal metabolites characterized by a highly oxygenated pyrano-quinone bicyclic core and exhibiting a broad range of bioactivities. In the first step, the non-reducing polyketide synthase azaA forms the hexaketide precursor from successive condensations of five malonyl-CoA units, presumably with a simple acetyl-CoA starter unit. The reactive polyketide chain then undergoes a PT-mediated C2-C7 cyclization to afford the aromatic ring and is eventually released as an aldehyde through the R-domain. The putative ketoreductase azaE is proposed to catalyze the reduction of the terminal ketone resulting in the early culture product FK17-P2a. The monooxygenase azaH was demonstrated to be the only enzyme required to convert FK17-P2a to azanigerone E. AzaH first hydroxylates the benzaldehyde intermediate FK17-P2a at C4, which triggers the formation of the pyran-ring to afford azanigerone E. In parallel, the 2,4-dimethylhexanoyl chain is synthesized by the HR-PKS azaB and is proposed to be transferred to the C4-hydroxyl of azanigerone E by the acyltransferase azaD directly from the ACP domain of azaB. Alternatively, the 2,4-dimethyl-hexanoyl chain may be offloaded from the HR-PKS as a carboxylic acid and converted to an acyl-CoA by azaF. The resulting acyl-CoA molecule could then be taken up as a substrate by AzaD to form azanigerone B. To yield the carboxylic acid substituent in azanigerone A, the hydroxypropyl side chain of azanigerone B would need to undergo a C-C oxidative cleavage catalyzed by cytochrome P450 AzaI. AzaI is proposed to act on a vicinal diol that leads to a C-C bond scission either through an alkoxyradical intermediate or a peroxy complex. In the biosynthesis of azanigerone A, azanigerone B first undergoes hydroxylation at C10, possibly catalyzed by one of the two FAD-dependent monooxygenases encoded in the cluster, azaG or azaL, resulting in the vicinal diol azanigerone C. Oxidative cleavage of azanigerone C by azaI would yield the corresponding aldehyde derivative of azanigerone A. Finally, the dehydrogenase azaJ is proposed to convert the aldehyde functional group into the carboxylic acid, completing the conversion from azanigerone B to azanigerone A. Alternatively, the oxidation of aldehyde to carboxylic acid may be catalyzed by the same P450 enzyme azaI via consecutive oxidation or by endogenous alcohol dehydrogenase. This chain is Ketoreductase azaE, found in Aspergillus niger (strain ATCC 1015 / CBS 113.46 / FGSC A1144 / LSHB Ac4 / NCTC 3858a / NRRL 328 / USDA 3528.7).